The chain runs to 207 residues: Outer-membrane lipoprotein LolB (207 aa).

The first 23 residues, 1–23, serve as a signal peptide directing secretion; sequence MPTMNRSRRLALLCLGAPLLLAA. Cysteine 24 is lipidated: N-palmitoyl cysteine. Cysteine 24 is lipidated: S-diacylglycerol cysteine. Residues 171 to 207 form a disordered region; the sequence is PSASQAPAPRPRRIDLEREGGPTPLAVKLVIDPEEAP.

The protein belongs to the LolB family. In terms of assembly, monomer.

The protein localises to the cell outer membrane. In terms of biological role, plays a critical role in the incorporation of lipoproteins in the outer membrane after they are released by the LolA protein. The protein is Outer-membrane lipoprotein LolB of Cupriavidus pinatubonensis (strain JMP 134 / LMG 1197) (Cupriavidus necator (strain JMP 134)).